The primary structure comprises 309 residues: Homoserine kinase (309 aa).

An ATP-binding site is contributed by 91–101 (PVGSGLGSSAC).

Belongs to the GHMP kinase family. Homoserine kinase subfamily.

The protein localises to the cytoplasm. It catalyses the reaction L-homoserine + ATP = O-phospho-L-homoserine + ADP + H(+). It functions in the pathway amino-acid biosynthesis; L-threonine biosynthesis; L-threonine from L-aspartate: step 4/5. In terms of biological role, catalyzes the ATP-dependent phosphorylation of L-homoserine to L-homoserine phosphate. The polypeptide is Homoserine kinase (Hamiltonella defensa subsp. Acyrthosiphon pisum (strain 5AT)).